We begin with the raw amino-acid sequence, 503 residues long: E3 ubiquitin-protein ligase IE61 (503 aa).

The RING-type zinc finger occupies 19–58 (CAICMSAISGLGKTLPCLHDFCFVCIQTWTSTSAQCPLCR). Disordered stretches follow at residues 175–194 (AVITPTTSTGPRLHLSPSSR), 367–418 (SGPI…LFVD), and 445–503 (AALP…VRRK). Residues 375–388 (GGSTSQDTSVSNIH) show a composition bias toward polar residues. A compositionally biased stretch (low complexity) spans 389–403 (RSPPGGSSTQPSSGR). The segment covering 404 to 414 (RPGRPKGVKRR) has biased composition (basic residues). The segment covering 471-480 (PSTSGSSPSP) has biased composition (low complexity).

Interacts with host BTRC; this interaction seems to inactivate SCF-mediated protein degradation in general.

The enzyme catalyses S-ubiquitinyl-[E2 ubiquitin-conjugating enzyme]-L-cysteine + [acceptor protein]-L-lysine = [E2 ubiquitin-conjugating enzyme]-L-cysteine + N(6)-ubiquitinyl-[acceptor protein]-L-lysine.. RING-finger E3 ubiquitin ligase that degrades host SP100, one of the major components of ND10 nuclear bodies, thereby disrupting the organization of these bodies. Also plays a role in the inhibition of host NF-kappa-B pathway by blocking the SCF(BTRC)-mediated addition of ubiquitin chains to host IkappaBalpha/NFKBIA, thereby interfering with its degradation. The chain is E3 ubiquitin-protein ligase IE61 from Cercopithecine herpesvirus 9 (strain DHV) (CeHV-9).